The sequence spans 237 residues: Pheromone-regulated membrane protein 8 (237 aa).

The Cytoplasmic portion of the chain corresponds to M1–H47. A helical membrane pass occupies residues C48–F68. The Extracellular portion of the chain corresponds to H69 to C74. Residues V75 to L95 form a helical membrane-spanning segment. Topologically, residues R96 to F237 are cytoplasmic. A disordered region spans residues S174 to F201. Residues F236–F237 are COPII binding.

This sequence belongs to the DUP/COS family. Interacts with PRM9. Binds to SEC23/24 of COPII coated vesicles.

It localises to the membrane. The protein localises to the endoplasmic reticulum. In terms of biological role, may be involved in endoplasmic reticulum exit trafficking of proteins. The polypeptide is Pheromone-regulated membrane protein 8 (PRM8) (Saccharomyces cerevisiae (strain ATCC 204508 / S288c) (Baker's yeast)).